Reading from the N-terminus, the 512-residue chain is MEEFKGYLEKGGFKQQHFLYPLLFQEYIYALAYDQGLNVNASTFNEPVEISGYDKKYSSLLVKRLIKRLYQQNSLIHSVNNAKQNRFVGHNKNFYYQMISEGFSIVVEIPFSLRLISSLKEKKEIPKYQNLRSIHSIFSFLEDKFAHLNYISDILIPYPVHLEKLIQILQCWIQDVPTLHLLRLFFHDYHNWSNDITITTNKSTYGFSKDNARLYRFLYNSYVVECESIFVFLRKSSSYLQSTSFGPLLERTHFYGKMKDIGIISCNDFQKPLGLFKDPFMHYVRYQGKSIIASRGTHLLLKKWKSYFLNLWQCHFHFWSQPSRIHINQFAHFSFYFLGYLSSVEMNPSSMKSQMLENSFLIDTVTPKFQTLIAIIPMIGSLARAKFCNLSGNPISKPVWTDLSDSEIIDRFGRLCRNISHYYSGSSKKQSLYRIKYILRLSCARTLARKHKTTVRTFLQRLGSEFFEEFFMEEEKVLSLMLARTSYPLHQLYREPIWYLDIIRINDLVNHL.

Belongs to the intron maturase 2 family. MatK subfamily.

The protein resides in the plastid. It localises to the chloroplast. Its function is as follows. Usually encoded in the trnK tRNA gene intron. Probably assists in splicing its own and other chloroplast group II introns. This chain is Maturase K, found in Wolffiella gladiata (Florida mud-midget).